A 355-amino-acid chain; its full sequence is D-alanine--D-alanine ligase (355 aa).

Positions 143–350 constitute an ATP-grasp domain; the sequence is KQIFSNLSIP…IDQLVAKLID (208 aa). Residue 178–233 participates in ATP binding; it reads IEKLNLPVFVKPANSGSSLGISKAKNKSEIIKALQKAWEIDSRIVIEEGLNVRELE. Positions 303, 317, and 319 each coordinate Mg(2+).

The protein belongs to the D-alanine--D-alanine ligase family. The cofactor is Mg(2+). Mn(2+) is required as a cofactor.

The protein resides in the cytoplasm. The enzyme catalyses 2 D-alanine + ATP = D-alanyl-D-alanine + ADP + phosphate + H(+). It functions in the pathway cell wall biogenesis; peptidoglycan biosynthesis. Functionally, cell wall formation. The polypeptide is D-alanine--D-alanine ligase (Prochlorococcus marinus (strain MIT 9515)).